Consider the following 210-residue polypeptide: MARLPKRKNRRNEKKKNANASRVQNVPRTFGLWKSTERIKYTTELKYLNSKCRAIRLHPDLVANNSFPTYCSAWKIDQVEFEFVSYMSPLAGHVGCVFFVVIPAKGLNSRISADEAESLQSAILWDEKGRLKITPISGPISRHPWTNLSQVVTPPQIPKGSTDGERQDLQSGYYLIFDSRKLFGKDLVDKQSVLGELSLTITATYWTSLS.

The segment covering 1–14 (MARLPKRKNRRNEK) has biased composition (basic residues). The interval 1–21 (MARLPKRKNRRNEKKKNANAS) is disordered.

It is found in the virion. Its function is as follows. Capsid protein self-assembles to form a baciliform capsid with a T=1 symmetry, about 18 nm in diameter. The capsid encapsulates three genomic RNAs (Potential). This chain is Capsid protein, found in Cucumis melo (Muskmelon).